The primary structure comprises 999 residues: uncharacterized protein (999 aa).

Low complexity predominate over residues Asn45–Ser128. Positions Asn45–Val129 are disordered. A coiled-coil region spans residues Tyr723–Gln767. The span at Asn873–Asn887 shows a compositional bias: low complexity. Residues Asn873–Asn904 are disordered. The helical transmembrane segment at Leu976–Phe996 threads the bilayer.

The protein localises to the membrane. This is an uncharacterized protein from Dictyostelium discoideum (Social amoeba).